The primary structure comprises 141 residues: MAKKVIKMVKLQIPAGKANPAPPVGPALGQAGVNIMGFCKEFNARTSDQAGLIIPVEITVFEDRSFTFITKTPPAAVLLKKAAGIDSGSGEPNRTKVATVKRDKVREIAETKMPDLNAASVEAAMRMVEGTARSMGIVIED.

This sequence belongs to the universal ribosomal protein uL11 family. As to quaternary structure, part of the ribosomal stalk of the 50S ribosomal subunit. Interacts with L10 and the large rRNA to form the base of the stalk. L10 forms an elongated spine to which L12 dimers bind in a sequential fashion forming a multimeric L10(L12)X complex. In terms of processing, one or more lysine residues are methylated.

Forms part of the ribosomal stalk which helps the ribosome interact with GTP-bound translation factors. This Shouchella clausii (strain KSM-K16) (Alkalihalobacillus clausii) protein is Large ribosomal subunit protein uL11.